The primary structure comprises 80 residues: MSTAIWILLIIVALTAGLFGGIFIARKQIEKEIGEHPRLTPEAIREMMSQMGQKPSEAKIQQTYRNIVKQSKAAMTKGKK.

The helical transmembrane segment at 4–24 threads the bilayer; the sequence is AIWILLIIVALTAGLFGGIFI.

It belongs to the UPF0154 family.

It localises to the cell membrane. This chain is UPF0154 protein SZO_03240, found in Streptococcus equi subsp. zooepidemicus (strain H70).